A 710-amino-acid polypeptide reads, in one-letter code: Assimilatory nitrate reductase catalytic subunit (710 aa).

In terms of domain architecture, 4Fe-4S Mo/W bis-MGD-type spans 19–77 (EKTYDTQCPFCSMQCKMQLVEQTIVTRKKYTAIGIDNPTTQGRLCIKGMNAHQHALNSS). Residues cysteine 26, cysteine 29, cysteine 33, and cysteine 63 each coordinate [4Fe-4S] cluster.

It belongs to the prokaryotic molybdopterin-containing oxidoreductase family. It depends on [4Fe-4S] cluster as a cofactor. Requires Mo-bis(molybdopterin guanine dinucleotide) as cofactor.

The protein operates within nitrogen metabolism; nitrate reduction (denitrification); dinitrogen from nitrate: step 1/4. Its function is as follows. Nitrate reductase is a key enzyme involved in the first step of nitrate assimilation in plants, fungi and bacteria. The sequence is that of Assimilatory nitrate reductase catalytic subunit (nasC) from Bacillus subtilis (strain 168).